Consider the following 362-residue polypeptide: MTKKTQVGLIFGGNSSEYEVSITSAGNIYKAIDKDKFDVHPIWITNSGYVASEADSYKVLEEPGYMVEKNDKTANLSNLIELASRPELDVLFPIVHGNLGEDGVLQGLFRLIDKPFVGVDVLAAAVTMDKEFTKILAQRAGVPVAKWVSIKRYEYEDAKNQKLSYDWVSGQLGTSNLFVKPSNQGSSVGITHVTDDSNYAEALAEAFKYDDKVLVEEGIVGTEVETAVLGNDHPVVSGVGQIINADNTWYSYENKYSTESTTTLQIPAQIPAETAEKVQENALKIYQITECSGMARVDSMLRESDGEVIFNELNALPGFTNISMYPKLFEEAGISYPDLITRLIRLAEERYAHKKTILHKHD.

One can recognise an ATP-grasp domain in the interval 134-345 (KILAQRAGVP…YPDLITRLIR (212 aa)). 170–225 (GQLGTSNLFVKPSNQGSSVGITHVTDDSNYAEALAEAFKYDDKVLVEEGIVGTEVE) is an ATP binding site. Mg(2+) contacts are provided by D298, E312, and N314.

Belongs to the D-alanine--D-alanine ligase family. Requires Mg(2+) as cofactor. Mn(2+) serves as cofactor.

The protein resides in the cytoplasm. The catalysed reaction is 2 D-alanine + ATP = D-alanyl-D-alanine + ADP + phosphate + H(+). It functions in the pathway cell wall biogenesis; peptidoglycan biosynthesis. Its function is as follows. Cell wall formation. The sequence is that of D-alanine--D-alanine ligase from Lactobacillus delbrueckii subsp. bulgaricus (strain ATCC BAA-365 / Lb-18).